A 374-amino-acid chain; its full sequence is O-methyltransferase 16 (374 aa).

S-adenosyl-L-homocysteine is bound by residues S195, G219, D242, D262, and K276. D242 is a binding site for S-adenosyl-L-methionine. The active-site Proton acceptor is H280.

Belongs to the class I-like SAM-binding methyltransferase superfamily. Cation-independent O-methyltransferase family. As to quaternary structure, homodimer. Expressed mainly in vasculature and cortex tissues at low levels.

The enzyme catalyses dopamine + S-adenosyl-L-methionine = 4-methoxytyramine + S-adenosyl-L-homocysteine + H(+). It participates in aromatic compound metabolism. The protein operates within alkaloid biosynthesis. In terms of biological role, O-methyltransferase participating in the biosynthesis of natural products derived from phenylethylamine, including mescaline, a natural hallucinogen potentially used in psychotherapeutic treatments. Catalyzes the O-methylation of dopamine to produce 4-methoxytyramine. This chain is O-methyltransferase 16, found in Lophophora williamsii (Peyote).